A 64-amino-acid chain; its full sequence is MGMRMMFTVFLLVVLTTTVVSFPSDSASDGRDDEAKDERSDIYESKRDGRCCHPACGKYYSCGR.

An N-terminal signal peptide occupies residues 1–21 (MGMRMMFTVFLLVVLTTTVVS). Positions 22-49 (FPSDSASDGRDDEAKDERSDIYESKRDG) are excised as a propeptide. Disulfide bonds link Cys51/Cys56 and Cys52/Cys62. Cys62 bears the Cysteine amide mark.

Belongs to the conotoxin A superfamily. Expressed by the venom duct.

Its subcellular location is the secreted. This chain is Alpha-conotoxin CnIL, found in Conus consors (Singed cone).